The sequence spans 99 residues: Small ribosomal subunit protein uS14 (99 aa).

This sequence belongs to the universal ribosomal protein uS14 family. As to quaternary structure, part of the 30S ribosomal subunit. Contacts proteins S3 and S10.

Binds 16S rRNA, required for the assembly of 30S particles and may also be responsible for determining the conformation of the 16S rRNA at the A site. This chain is Small ribosomal subunit protein uS14, found in Bacteroides fragilis (strain ATCC 25285 / DSM 2151 / CCUG 4856 / JCM 11019 / LMG 10263 / NCTC 9343 / Onslow / VPI 2553 / EN-2).